Consider the following 227-residue polypeptide: Cytochrome c oxidase subunit 2 (227 aa).

The Mitochondrial intermembrane segment spans residues 1 to 14 (MAYPFQLGLQDATS). A helical transmembrane segment spans residues 15-45 (PIMEELTNFHDHTLMIVFLISSLVLYIISLM). Residues 46-59 (LTTKLTHTSTMDAQ) lie on the Mitochondrial matrix side of the membrane. The helical transmembrane segment at 60–87 (EVETIWTILPAVILILIALPSLRILYMM) threads the bilayer. Residues 88 to 227 (DEINNPVLTV…YFENWSASMI (140 aa)) lie on the Mitochondrial intermembrane side of the membrane. Residues His161, Cys196, Glu198, Cys200, His204, and Met207 each contribute to the Cu cation site. Glu198 serves as a coordination point for Mg(2+). Tyr218 carries the post-translational modification Phosphotyrosine.

The protein belongs to the cytochrome c oxidase subunit 2 family. Component of the cytochrome c oxidase (complex IV, CIV), a multisubunit enzyme composed of 14 subunits. The complex is composed of a catalytic core of 3 subunits MT-CO1, MT-CO2 and MT-CO3, encoded in the mitochondrial DNA, and 11 supernumerary subunits COX4I, COX5A, COX5B, COX6A, COX6B, COX6C, COX7A, COX7B, COX7C, COX8 and NDUFA4, which are encoded in the nuclear genome. The complex exists as a monomer or a dimer and forms supercomplexes (SCs) in the inner mitochondrial membrane with NADH-ubiquinone oxidoreductase (complex I, CI) and ubiquinol-cytochrome c oxidoreductase (cytochrome b-c1 complex, complex III, CIII), resulting in different assemblies (supercomplex SCI(1)III(2)IV(1) and megacomplex MCI(2)III(2)IV(2)). Found in a complex with TMEM177, COA6, COX18, COX20, SCO1 and SCO2. Interacts with TMEM177 in a COX20-dependent manner. Interacts with COX20. Interacts with COX16. Cu cation is required as a cofactor.

Its subcellular location is the mitochondrion inner membrane. The catalysed reaction is 4 Fe(II)-[cytochrome c] + O2 + 8 H(+)(in) = 4 Fe(III)-[cytochrome c] + 2 H2O + 4 H(+)(out). Functionally, component of the cytochrome c oxidase, the last enzyme in the mitochondrial electron transport chain which drives oxidative phosphorylation. The respiratory chain contains 3 multisubunit complexes succinate dehydrogenase (complex II, CII), ubiquinol-cytochrome c oxidoreductase (cytochrome b-c1 complex, complex III, CIII) and cytochrome c oxidase (complex IV, CIV), that cooperate to transfer electrons derived from NADH and succinate to molecular oxygen, creating an electrochemical gradient over the inner membrane that drives transmembrane transport and the ATP synthase. Cytochrome c oxidase is the component of the respiratory chain that catalyzes the reduction of oxygen to water. Electrons originating from reduced cytochrome c in the intermembrane space (IMS) are transferred via the dinuclear copper A center (CU(A)) of subunit 2 and heme A of subunit 1 to the active site in subunit 1, a binuclear center (BNC) formed by heme A3 and copper B (CU(B)). The BNC reduces molecular oxygen to 2 water molecules using 4 electrons from cytochrome c in the IMS and 4 protons from the mitochondrial matrix. This Dacnomys millardi (Millard's rat) protein is Cytochrome c oxidase subunit 2 (MT-CO2).